Consider the following 341-residue polypeptide: Guanine nucleotide-binding protein subunit beta (341 aa).

WD repeat units lie at residues 54–84 (GHLAKIYAMHWASDSRNLVSASQDGKLIVWD), 96–126 (LRSSWVMTCAYAPSGNYVACGGLDNICSIYS), 142–171 (GHTGYLSCCRFIDDNQIVTSSGDMTCALWN), 183–213 (GHTGDVMSLSLAPDMRTFVSGACDASAKLFD), 225–255 (GHESDINAITYFPNGFAFATGSDDATCRLFD), 269–299 (NIICGITSVAFSKSGRLLLGGYDDFNCNVWD), and 311–341 (GHDNRVSCLGVTEDGMAVATGSWDSFLKIWN).

This sequence belongs to the WD repeat G protein beta family. In terms of assembly, g proteins are composed of 3 units, alpha, beta and gamma.

In terms of biological role, guanine nucleotide-binding proteins (G proteins) are involved as a modulator or transducer in various transmembrane signaling systems. The beta and gamma chains are required for the GTPase activity, for replacement of GDP by GTP, and for G protein-effector interaction. The chain is Guanine nucleotide-binding protein subunit beta from Loligo forbesii (Veined squid).